The sequence spans 481 residues: 3-isopropylmalate dehydratase large subunit (481 aa).

Residues C357, C417, and C420 each coordinate [4Fe-4S] cluster.

The protein belongs to the aconitase/IPM isomerase family. LeuC type 1 subfamily. As to quaternary structure, heterodimer of LeuC and LeuD. The cofactor is [4Fe-4S] cluster.

The catalysed reaction is (2R,3S)-3-isopropylmalate = (2S)-2-isopropylmalate. The protein operates within amino-acid biosynthesis; L-leucine biosynthesis; L-leucine from 3-methyl-2-oxobutanoate: step 2/4. In terms of biological role, catalyzes the isomerization between 2-isopropylmalate and 3-isopropylmalate, via the formation of 2-isopropylmaleate. The protein is 3-isopropylmalate dehydratase large subunit of Maricaulis maris (strain MCS10) (Caulobacter maris).